Consider the following 377-residue polypeptide: Benzylmalonyl-CoA dehydrogenase (377 aa).

Residues 123 to 132 (ICMTEPNAGS), 156 to 158 (WIT), R266, Q277, and 363 to 365 (TSE) contribute to the FAD site.

It belongs to the acyl-CoA dehydrogenase family. As to quaternary structure, homotetramer. FAD serves as cofactor.

It catalyses the reaction (2-aminobenzyl)malonyl-CoA + O2 + H(+) = (E)-2-aminocinnamoyl-CoA + H2O2 + CO2. The catalysed reaction is benzylmalonyl-CoA + O2 + H(+) = (E)-cinnamoyl-CoA + H2O2 + CO2. In terms of biological role, involved in degradation of indoleacetate, the most common member of the auxin class of plant hormones. Catalyzes the irreversible oxidative decarboxylation of (2-aminobenzyl)malonyl-CoA to 2-aminocinnamoyl-CoA and CO(2). In vitro, shows high catalytic efficiency with benzylmalonyl-CoA, a chemical analog of the physiological substrate, but otherwise accepts only a few medium-chain alkylmalonyl-CoA compounds as alternative substrates with low activities. In Aromatoleum aromaticum (strain DSM 19018 / LMG 30748 / EbN1) (Azoarcus sp. (strain EbN1)), this protein is Benzylmalonyl-CoA dehydrogenase.